Reading from the N-terminus, the 729-residue chain is MLYQGESLYLNWLEDGIAELVFSAPGSVNTLDTRTVASLGKALDVLAEQPNLKGLLLRSDKPAFIVGADITEFLSLFAAPAEKLHEWLVFANSIFNRLEDLPVPTLSAINSYALGGGCECVLATDFRLATPDARIGLPETKLGIMPGFGGTVRLPRLLGADSALEIIAAGKDVSAADALKVGLVQAVVANEKLIPAAIKMLKQAINGELDWLGYRRPKLEALKLNKIEAMMSFTTAKAMVLQTAGKHYPAPMLAVKTIEAAATMTRDEALQLETQHFVQLARSNEARALVGIFLNDQYVKGKAKKLVGETPVPQQAAVLGAGIMGGGIAYQSAFKGVPIRMKDINEKPLALGMNEAAKLLNKQMERGKLDGMKMATILANIHPTLDYAGFERTDIVVEAVVENPKIKASVLAETESHISESTILASNTSTIPIAVLAAALKRPQNFCGMHFFNPVHRMPLVEIIRGPKTSDSTIASVVAYASKMGKTPIVVNDCPGFFVNRVLFPYFAAFSLLLRDGADFREIDNAMEKKFGWPMGPAYLLDVVGIDTAHHAQAVMAEGFPQRMAKDYRDAIDVLFEHQRFGQKNGQGFYRYQTDSKGKQRKEQDDAVDALLKNISQPKKAFSAEEIIARMMIPMINEVARCLEEGIVASPAEADMALVYGLGFPPFHGGACRYLDTLGSERYVEMAQQLAHLGAIYQVPDGLQQKARSNEGYYPSVAPHADVSHGQPA.

Positions 1–189 (MLYQGESLYL…KVGLVQAVVA (189 aa)) are enoyl-CoA hydratase/isomerase. Substrate is bound at residue D296. Residues 311-729 (PVPQQAAVLG…HADVSHGQPA (419 aa)) are 3-hydroxyacyl-CoA dehydrogenase. Residues M324, D343, 400–402 (VVE), K407, and S429 each bind NAD(+). Catalysis depends on H450, which acts as the For 3-hydroxyacyl-CoA dehydrogenase activity. Residue N453 participates in NAD(+) binding. Positions 500 and 660 each coordinate substrate.

In the N-terminal section; belongs to the enoyl-CoA hydratase/isomerase family. This sequence in the C-terminal section; belongs to the 3-hydroxyacyl-CoA dehydrogenase family. In terms of assembly, heterotetramer of two alpha chains (FadB) and two beta chains (FadA).

It catalyses the reaction a (3S)-3-hydroxyacyl-CoA + NAD(+) = a 3-oxoacyl-CoA + NADH + H(+). It carries out the reaction a (3S)-3-hydroxyacyl-CoA = a (2E)-enoyl-CoA + H2O. The enzyme catalyses a 4-saturated-(3S)-3-hydroxyacyl-CoA = a (3E)-enoyl-CoA + H2O. The catalysed reaction is (3S)-3-hydroxybutanoyl-CoA = (3R)-3-hydroxybutanoyl-CoA. It catalyses the reaction a (3Z)-enoyl-CoA = a 4-saturated (2E)-enoyl-CoA. It carries out the reaction a (3E)-enoyl-CoA = a 4-saturated (2E)-enoyl-CoA. It functions in the pathway lipid metabolism; fatty acid beta-oxidation. Its function is as follows. Involved in the aerobic and anaerobic degradation of long-chain fatty acids via beta-oxidation cycle. Catalyzes the formation of 3-oxoacyl-CoA from enoyl-CoA via L-3-hydroxyacyl-CoA. It can also use D-3-hydroxyacyl-CoA and cis-3-enoyl-CoA as substrate. This Pectobacterium atrosepticum (strain SCRI 1043 / ATCC BAA-672) (Erwinia carotovora subsp. atroseptica) protein is Fatty acid oxidation complex subunit alpha.